Reading from the N-terminus, the 209-residue chain is Histidine biosynthesis bifunctional protein HisIE (209 aa).

The tract at residues 1–116 (MKQADELRFN…EEQAADRFGI (116 aa)) is phosphoribosyl-AMP cyclohydrolase. The segment at 117–209 (MNELERVIAE…LKKRHSEIEE (93 aa)) is phosphoribosyl-ATP pyrophosphohydrolase.

This sequence in the N-terminal section; belongs to the PRA-CH family. It in the C-terminal section; belongs to the PRA-PH family.

Its subcellular location is the cytoplasm. The catalysed reaction is 1-(5-phospho-beta-D-ribosyl)-ATP + H2O = 1-(5-phospho-beta-D-ribosyl)-5'-AMP + diphosphate + H(+). It carries out the reaction 1-(5-phospho-beta-D-ribosyl)-5'-AMP + H2O = 1-(5-phospho-beta-D-ribosyl)-5-[(5-phospho-beta-D-ribosylamino)methylideneamino]imidazole-4-carboxamide. It participates in amino-acid biosynthesis; L-histidine biosynthesis; L-histidine from 5-phospho-alpha-D-ribose 1-diphosphate: step 2/9. Its pathway is amino-acid biosynthesis; L-histidine biosynthesis; L-histidine from 5-phospho-alpha-D-ribose 1-diphosphate: step 3/9. This chain is Histidine biosynthesis bifunctional protein HisIE (hisI), found in Bacillus subtilis (strain 168).